Consider the following 684-residue polypeptide: Threonine--tRNA ligase (684 aa).

One can recognise a TGS domain in the interval Met-1–Ala-66. The interval Asp-261–Pro-567 is catalytic. Cys-366, His-417, and His-544 together coordinate Zn(2+).

The protein belongs to the class-II aminoacyl-tRNA synthetase family. In terms of assembly, homodimer. Zn(2+) serves as cofactor.

The protein resides in the cytoplasm. The catalysed reaction is tRNA(Thr) + L-threonine + ATP = L-threonyl-tRNA(Thr) + AMP + diphosphate + H(+). Its function is as follows. Catalyzes the attachment of threonine to tRNA(Thr) in a two-step reaction: L-threonine is first activated by ATP to form Thr-AMP and then transferred to the acceptor end of tRNA(Thr). Also edits incorrectly charged L-seryl-tRNA(Thr). The protein is Threonine--tRNA ligase of Mycolicibacterium smegmatis (strain ATCC 700084 / mc(2)155) (Mycobacterium smegmatis).